The sequence spans 95 residues: MSFKPLHDRIAIKPIEHEEKTKGGIIIPDTAKEKPMQGEIVAVGNGVRNKKGEIHPLELKVGDKVLYGKWAGTEIEIKGEKLIVMKESDVFGIIN.

This sequence belongs to the GroES chaperonin family. In terms of assembly, heptamer of 7 subunits arranged in a ring. Interacts with the chaperonin GroEL.

It is found in the cytoplasm. Functionally, together with the chaperonin GroEL, plays an essential role in assisting protein folding. The GroEL-GroES system forms a nano-cage that allows encapsulation of the non-native substrate proteins and provides a physical environment optimized to promote and accelerate protein folding. GroES binds to the apical surface of the GroEL ring, thereby capping the opening of the GroEL channel. The sequence is that of Co-chaperonin GroES from Rickettsia akari (strain Hartford).